The sequence spans 275 residues: Ditrans,polycis-undecaprenyl-diphosphate synthase ((2E,6E)-farnesyl-diphosphate specific) (275 aa).

The active site involves Asp45. Asp45 lines the Mg(2+) pocket. Residues 46 to 49 (GNGR), Trp50, Arg58, His62, and 90 to 92 (SSE) contribute to the substrate site. The active-site Proton acceptor is the Asn93. Residues Trp94, Arg96, Arg213, and 219–221 (RIS) each bind substrate. Glu232 contributes to the Mg(2+) binding site.

It belongs to the UPP synthase family. Homodimer. Requires Mg(2+) as cofactor.

It catalyses the reaction 8 isopentenyl diphosphate + (2E,6E)-farnesyl diphosphate = di-trans,octa-cis-undecaprenyl diphosphate + 8 diphosphate. Catalyzes the sequential condensation of isopentenyl diphosphate (IPP) with (2E,6E)-farnesyl diphosphate (E,E-FPP) to yield (2Z,6Z,10Z,14Z,18Z,22Z,26Z,30Z,34E,38E)-undecaprenyl diphosphate (di-trans,octa-cis-UPP). UPP is the precursor of glycosyl carrier lipid in the biosynthesis of bacterial cell wall polysaccharide components such as peptidoglycan and lipopolysaccharide. This chain is Ditrans,polycis-undecaprenyl-diphosphate synthase ((2E,6E)-farnesyl-diphosphate specific), found in Shewanella oneidensis (strain ATCC 700550 / JCM 31522 / CIP 106686 / LMG 19005 / NCIMB 14063 / MR-1).